The following is a 183-amino-acid chain: Putative manganese efflux pump MntP 1 (183 aa).

6 helical membrane passes run 6–26 (LFLLALAISLDAFGVILCIGI), 36–56 (IIFVFSFGFFQFFLSFLGGYI), 64–84 (IVPIPTIVGGLIIIIVGILMI), 100–120 (IMYLILGVSVSIDALVIGFTT), 130–150 (LFMSSLFMGLIATIICSLGII), and 158–178 (ISIISSYADYIGGIILILFGL).

It belongs to the MntP (TC 9.B.29) family.

Its subcellular location is the cell membrane. Functionally, probably functions as a manganese efflux pump. This chain is Putative manganese efflux pump MntP 1, found in Clostridium botulinum (strain Langeland / NCTC 10281 / Type F).